Here is a 192-residue protein sequence, read N- to C-terminus: Ion-translocating oxidoreductase complex subunit A (192 aa).

The next 6 membrane-spanning stretches (helical) occupy residues 5-25 (LLLLIGTVLVNNFVLVKFLGL), 39-59 (IGMSMATTFVLTLASVLSFLV), 72-92 (LRTMSFILVIAVVVQFTEMLV), 102-122 (ALGIYLPLITTNCAVLGVALL), 134-154 (AIYGFGAAVGFSLVLILFSAM), and 171-191 (AIAMITAGLMSLAFMGFTGLV).

Belongs to the NqrDE/RnfAE family. The complex is composed of six subunits: RnfA, RnfB, RnfC, RnfD, RnfE and RnfG.

It localises to the cell inner membrane. In terms of biological role, part of a membrane-bound complex that couples electron transfer with translocation of ions across the membrane. This is Ion-translocating oxidoreductase complex subunit A from Shewanella amazonensis (strain ATCC BAA-1098 / SB2B).